A 278-amino-acid chain; its full sequence is Trehalose monomycolate transport factor A (278 aa).

Position 1 (methionine 1) is a topological domain, periplasmic. The chain crosses the membrane as a helical span at residues 2–22; that stretch reads VPLWFTLSALCFVGAAVLLYV. The Cytoplasmic segment spans residues 23–278; that stretch reads DIDRRRGLGR…NGREASHFQR (256 aa). The interval 200–278 is disordered; sequence PPVPQNGSQA…NGREASHFQR (79 aa). Positions 269–278 are enriched in basic and acidic residues; sequence NGREASHFQR.

Monomer. Interacts (via N-terminus) with MmpL3; active trehalose monomycolate (TMM) biosynthesis is not required for the complex formation. Interacts with MSMEG_5308.

It localises to the cell inner membrane. The protein localises to the cell septum. Its subcellular location is the cell tip. In terms of biological role, required for MmpL3-dependent trehalose monomycolate (TMM) transport to the cell wall. Required for growth and cell elongation. The protein is Trehalose monomycolate transport factor A of Mycolicibacterium smegmatis (strain ATCC 700084 / mc(2)155) (Mycobacterium smegmatis).